Reading from the N-terminus, the 358-residue chain is Nitric oxide synthase oxygenase (358 aa).

Position 62 (Cys-62) interacts with heme.

Belongs to the NOS family. Bacterial NOS oxygenase subfamily. Homodimer. It depends on heme as a cofactor. Requires (6S)-5,6,7,8-tetrahydrofolate as cofactor.

It carries out the reaction 3 reduced [flavodoxin] + 2 L-arginine + 4 O2 = 3 oxidized [flavodoxin] + 2 L-citrulline + 2 nitric oxide + 4 H2O + 5 H(+). Its function is as follows. Catalyzes the production of nitric oxide. This Staphylococcus aureus (strain MRSA252) protein is Nitric oxide synthase oxygenase (nos).